The primary structure comprises 63 residues: KEGYGVGKDGCKISCVIGNEFCNKECKYSQKGTGGYCWTWGLACWCQGLPENAKVWESSTNTC.

An LCN-type CS-alpha/beta domain is found at 1–63 (KEGYGVGKDG…KVWESSTNTC (63 aa)). Intrachain disulfides connect C11/C63, C15/C37, C22/C44, and C26/C46.

It belongs to the long (4 C-C) scorpion toxin superfamily. Sodium channel inhibitor family. Beta subfamily. As to expression, expressed by the venom gland.

Its subcellular location is the secreted. Its function is as follows. Beta toxins bind voltage-independently at site-4 of sodium channels (Nav) and shift the voltage of activation toward more negative potentials thereby affecting sodium channel activation and promoting spontaneous and repetitive firing. Induces paralysis in cricket A.domestica but does not induce death. The sequence is that of Beta-insect depressant toxin Im-3 from Isometrus maculatus (Lesser brown scorpion).